Here is a 682-residue protein sequence, read N- to C-terminus: Homeobox-leucine zipper protein HDG7 (682 aa).

The tract at residues 33–65 is disordered; sequence LSDDSFDAMSGDEDKQEQRPKKKKRKTKYHRHT. Residues 52 to 65 are compositionally biased toward basic residues; sequence PKKKKRKTKYHRHT. The segment at residues 57-116 is a DNA-binding region (homeobox); sequence RKTKYHRHTSYQIQELESFFKECPHPNEKQRLELGKKLTLESKQIKFWFQNRRTQMKTQL. A coiled-coil region spans residues 105 to 186; it reads FQNRRTQMKT…LDRICALANR (82 aa). An START domain is found at 214-429; that stretch reads SGGTSLMFMD…LQRQCESFTM (216 aa).

Belongs to the HD-ZIP homeobox family. Class IV subfamily. As to quaternary structure, interacts with AIL7/PLT7. Expressed in cells around the base of leaf primordia, in the outermost 2 to 3 cell layers along the boundary between two leaf primordia. Expressed in lateral root primordia and tips, and in the epidermal boundaries of two cotyledons at heart-stage embryo.

It is found in the nucleus. Functionally, probable transcription factor that binds to the DNA sequence 5'-GCATTAAATGC-3'. Seems to promote cell differentiation. The sequence is that of Homeobox-leucine zipper protein HDG7 from Arabidopsis thaliana (Mouse-ear cress).